Here is a 368-residue protein sequence, read N- to C-terminus: G-protein coupled receptor 62 (368 aa).

Residues 1–18 (MANSTGLNASEVAGSLGL) lie on the Extracellular side of the membrane. 2 N-linked (GlcNAc...) asparagine glycosylation sites follow: Asn3 and Asn8. Residues 19–39 (ILAAVVEVGALLGNGALLVVV) traverse the membrane as a helical segment. Residues 40-53 (LRTPGLRDALYLAH) lie on the Cytoplasmic side of the membrane. The helical transmembrane segment at 54 to 74 (LCVVDLLAAASIMPLGLLAAP) threads the bilayer. Residues 75-91 (PPGLGRVRLGPAPCRAA) lie on the Extracellular side of the membrane. Residues 92-112 (RFLSAALLPACTLGVAALGLA) form a helical membrane-spanning segment. Over 113–129 (RYRLIVHPLRPGSRPPP) the chain is Cytoplasmic. Residues 130 to 150 (VLVLTAVWAAAGLLGALSLLG) form a helical membrane-spanning segment. Residues 151–177 (TPPAPPPAPARCSVLAGGLGPFRPLWA) lie on the Extracellular side of the membrane. A helical transmembrane segment spans residues 178-198 (LLAFALPALLLLGAYGGIFVV). Residues 199-239 (ARRAALRPPRPARGSRLHSDSLDSRLSILPPLRPRLPGGKA) are Cytoplasmic-facing. The chain crosses the membrane as a helical span at residues 240–260 (ALAPALAVGQFAACWLPYGCA). Residues 261–272 (CLAPAARAAEAE) are Extracellular-facing. Residues 273-293 (AAVTWVAYSAFAAHPFLYGLL) form a helical membrane-spanning segment. Topologically, residues 294-368 (QRPVRLALGR…YQGPPESSLS (75 aa)) are cytoplasmic. Positions 332–368 (RPPEGPAVGPSEAPEQTPELAGGRSPAYQGPPESSLS) are disordered.

This sequence belongs to the G-protein coupled receptor 1 family. As to quaternary structure, homodimers. Forms heterodimer with MTNR1B. Interacts with ARRB1 and ARRB2 in a spontaneous and agonist-independent manner; leading to the internalization of GPR62 in the endosomal compartment. As to expression, expressed in brain; detected in the basal forebrain, frontal cortex, caudate, putamen, thalamus and hippocampus.

It localises to the cell membrane. Its subcellular location is the endosome membrane. Its function is as follows. Orphan G-protein coupled receptor. Constitutively activates the G(q/11)/inositol phosphate and the G(s)-alpha/cAMP signaling pathways. Has spontaneous activity for beta-arrestin recruitment. Shows a reciprocal modulation of signaling functions with the melatonin receptor MTNR1B most likely through receptor heteromerization. The chain is G-protein coupled receptor 62 (GPR62) from Homo sapiens (Human).